The sequence spans 141 residues: ATP synthase epsilon chain (141 aa).

This sequence belongs to the ATPase epsilon chain family. As to quaternary structure, F-type ATPases have 2 components, CF(1) - the catalytic core - and CF(0) - the membrane proton channel. CF(1) has five subunits: alpha(3), beta(3), gamma(1), delta(1), epsilon(1). CF(0) has three main subunits: a, b and c.

It localises to the cell inner membrane. Produces ATP from ADP in the presence of a proton gradient across the membrane. The chain is ATP synthase epsilon chain from Burkholderia mallei (strain NCTC 10247).